The chain runs to 272 residues: Undecaprenyl-diphosphatase (272 aa).

Transmembrane regions (helical) follow at residues 2 to 22 (LELI…WLPI), 50 to 70 (VIQL…LFPF), 83 to 103 (FSLW…GVPF), 110 to 130 (LFYN…LFII), 148 to 168 (LGYK…IPGT), 195 to 215 (LAIP…GFAF), 220 to 240 (LIIL…AIKF), and 250 to 270 (FKAF…YFLA).

The protein belongs to the UppP family.

The protein localises to the cell membrane. It carries out the reaction di-trans,octa-cis-undecaprenyl diphosphate + H2O = di-trans,octa-cis-undecaprenyl phosphate + phosphate + H(+). Catalyzes the dephosphorylation of undecaprenyl diphosphate (UPP). Confers resistance to bacitracin. The sequence is that of Undecaprenyl-diphosphatase from Acetivibrio thermocellus (strain ATCC 27405 / DSM 1237 / JCM 9322 / NBRC 103400 / NCIMB 10682 / NRRL B-4536 / VPI 7372) (Clostridium thermocellum).